We begin with the raw amino-acid sequence, 230 residues long: 7-cyano-7-deazaguanine synthase (230 aa).

16 to 26 (LSGGLDSATVV) contacts ATP. Residues C195, C205, C208, and C211 each contribute to the Zn(2+) site.

It belongs to the QueC family. The cofactor is Zn(2+).

The catalysed reaction is 7-carboxy-7-deazaguanine + NH4(+) + ATP = 7-cyano-7-deazaguanine + ADP + phosphate + H2O + H(+). It participates in purine metabolism; 7-cyano-7-deazaguanine biosynthesis. Catalyzes the ATP-dependent conversion of 7-carboxy-7-deazaguanine (CDG) to 7-cyano-7-deazaguanine (preQ(0)). The chain is 7-cyano-7-deazaguanine synthase from Pseudomonas fluorescens (strain Pf0-1).